The sequence spans 362 residues: Putative movement protein (362 aa).

Its function is as follows. Suppressor of viral-induced RNA silencing. In Citrus (CLBV), this protein is Putative movement protein.